The sequence spans 136 residues: Invertebrate-type lysozyme (136 aa).

The N-terminal stretch at 1–11 (METVSVEEGLD) is a signal peptide. An I-type lysozyme domain is found at 14 to 130 (PGMVSQKCLL…WELLQKIPGC (117 aa)). 7 disulfide bridges follow: cysteine 21–cysteine 98, cysteine 24–cysteine 130, cysteine 26–cysteine 33, cysteine 38–cysteine 47, cysteine 60–cysteine 80, cysteine 70–cysteine 76, and cysteine 94–cysteine 112. Glutamate 29 functions as the Proton donor in the catalytic mechanism. The Nucleophile role is filled by aspartate 41. 53 to 59 (KQPYWID) serves as a coordination point for substrate. Asparagine 75 carries N-linked (GlcNAc...) asparagine glycosylation. Substrate is bound by residues tyrosine 84, tyrosine 92, 105–107 (HNG), and lysine 119.

Homodimer in its autoinhibited state. Active as monomer.

It is found in the secreted. The catalysed reaction is Hydrolysis of (1-&gt;4)-beta-linkages between N-acetylmuramic acid and N-acetyl-D-glucosamine residues in a peptidoglycan and between N-acetyl-D-glucosamine residues in chitodextrins.. With respect to regulation, chitinase activity is activated by high salt concentrations which cause the release of the monomer from the autoinhibited homodimer. Its function is as follows. Bacteriolytic activity against Gram-positive bacterium M.luteus and thereby probably protects against bacterial infection. Also has chitinase activity. May act as an ispopeptidase, cleaving isopeptide bonds between the side chains of Lys and Gln residues in proteins or in the cross-linking peptide of peptidoglycan in bacterial cell walls. This is Invertebrate-type lysozyme from Ruditapes philippinarum (Japanese carpet shell).